A 163-amino-acid polypeptide reads, in one-letter code: Globin CTT-V (163 aa).

A signal peptide spans 1-16; sequence MKFFAVLTLCIIGAIA. Positions 18-163 constitute a Globin domain; that stretch reads PLTSDEANLV…YTVAFEVIPA (146 aa). 2 residues coordinate heme b: histidine 76 and histidine 111.

Belongs to the globin family.

The polypeptide is Globin CTT-V (CTT-V) (Chironomus thummi piger (Midge)).